Here is a 245-residue protein sequence, read N- to C-terminus: MSNQWWDEWAEKCHSKAHRQLLFWRYLVKQTLLLVEDDKNLADGLLVSLEQAGYDCLHAETIADVKQHWDKADLVILDRQLPDGDSVQHLMDWKKIKDIPVILLTALVTVKDKVTGLDAGANDYLTKPFAEAELFARIRAQLRSPDSGQDDSKVVTSNLTIDKATREVFFNGESITLTRTEFDLLLFLASNLGRVFTRDELLDHVWGYNHFPTTRTVDTHVLQLRQKLPGLEIETLRGVGYKMKA.

Residues 31-142 (TLLLVEDDKN…ELFARIRAQL (112 aa)) form the Response regulatory domain. Aspartate 78 bears the 4-aspartylphosphate mark. The segment at residues 151 to 245 (DSKVVTSNLT…LRGVGYKMKA (95 aa)) is a DNA-binding region (ompR/PhoB-type).

In terms of processing, phosphorylated by VxrA.

The protein localises to the cytoplasm. Its function is as follows. Member of the two-component regulatory system VxrB/VxrA involved in the regulation of diverses processes, including virulence, the type VI secretion system (T6SS) and biofilm formation. VxrB positively regulates the expression of the T6SS, a virulence nanomachine that directly translocates effectors into bacterial or host cells, thereby facilitating colonization by competing with sister cells and intestinal microbiota. In addition, it activates vpsL expression and biofilm formation, and represses motility. May regulate biofilm formation via its regulation of key biofilm regulators and cyclic di-GMP levels. Significantly contributes to both attack and defense via T6SS, while also influencing competition via regulation of biofilm matrix production. Is critical for colonization in the infant mouse model. This Vibrio cholerae serotype O1 (strain ATCC 39315 / El Tor Inaba N16961) protein is Transcriptional regulatory protein VxrB.